We begin with the raw amino-acid sequence, 127 residues long: Small ribosomal subunit protein uS11 (127 aa).

Belongs to the universal ribosomal protein uS11 family. Part of the 30S ribosomal subunit. Interacts with proteins S7 and S18. Binds to IF-3.

Its function is as follows. Located on the platform of the 30S subunit, it bridges several disparate RNA helices of the 16S rRNA. Forms part of the Shine-Dalgarno cleft in the 70S ribosome. This chain is Small ribosomal subunit protein uS11, found in Chlorobium phaeobacteroides (strain BS1).